We begin with the raw amino-acid sequence, 504 residues long: Glutamate--tRNA ligase (504 aa).

The 'HIGH' region motif lies at 14 to 24; the sequence is PSPTGYLHVGG. Positions 261–265 match the 'KMSKS' region motif; sequence KLSKR. Lys-264 lines the ATP pocket.

Belongs to the class-I aminoacyl-tRNA synthetase family. Glutamate--tRNA ligase type 1 subfamily. In terms of assembly, monomer.

Its subcellular location is the cytoplasm. It catalyses the reaction tRNA(Glu) + L-glutamate + ATP = L-glutamyl-tRNA(Glu) + AMP + diphosphate. Catalyzes the attachment of glutamate to tRNA(Glu) in a two-step reaction: glutamate is first activated by ATP to form Glu-AMP and then transferred to the acceptor end of tRNA(Glu). In Chlorobium luteolum (strain DSM 273 / BCRC 81028 / 2530) (Pelodictyon luteolum), this protein is Glutamate--tRNA ligase.